Reading from the N-terminus, the 613-residue chain is MASLSGLYSSSPSLKPAKNHSFKALPAQSRDSFSFPHTSKPTNLPLTLSSARSVARDISHADSKKELLKDPDALWKRYLDWFYQQKELGLYLDISRVGFTDEFVAEMEPRFQAAFKAMEDLEKGSIANPDEGRMVGHYWLRNSKLAPKPTLKTLIENTLDSICAFSDDIISGKIKPPSSPEGRFTQILSVGIGGSALGPQFVAEALAPDNPPLKIRFIDNTDPAGIDHQIAQLGPELASTLVVVISKSGGTPETRNGLLEVQKAFREAGLNFAKQGVAITQENSLLDNTARIEGWLARFPMYDWVGGRTSIMSAVGLLPAALQGINVREMLTGAALMDEATRTTSIKNNPAALLAMCWYWASNGVGSKDMVVLPYKDSLLLFSRYLQQLVMESLGKEFDLDGNTVNQGLTVYGNKGSTDQHAYIQQLRDGVHNFFATFIEVLRDRPPGHDWELEPGVTCGDYLFGMLQGTRSALYANGRESISVTIQEVTPTSVGAIIALYERAVGLYASIVNINAYHQPGVEAGKKAAAEVLALQKRVLSVLNEATCKDPVEPLTLEEIADRCHAPEEIEMIYKIIAHMSANDRVLIAEGNCGSPRSIKVYLGECNVDDLYA.

Residues 1-14 (MASLSGLYSSSPSL) show a composition bias toward low complexity. The disordered stretch occupies residues 1–21 (MASLSGLYSSSPSLKPAKNHS). The N-terminal 48 residues, 1 to 48 (MASLSGLYSSSPSLKPAKNHSFKALPAQSRDSFSFPHTSKPTNLPLTL), are a transit peptide targeting the chloroplast. Residue glutamate 392 is the Proton donor of the active site. Catalysis depends on residues histidine 421 and lysine 526. Serine 595 carries the post-translational modification Phosphoserine.

It belongs to the GPI family.

It localises to the plastid. The protein resides in the chloroplast stroma. It carries out the reaction alpha-D-glucose 6-phosphate = beta-D-fructose 6-phosphate. Its pathway is carbohydrate degradation; glycolysis; D-glyceraldehyde 3-phosphate and glycerone phosphate from D-glucose: step 2/4. It functions in the pathway carbohydrate biosynthesis; gluconeogenesis. With respect to regulation, inhibited by glycerol-3-P (G3P). In terms of biological role, promotes the synthesis of starch in leaves. The protein is Glucose-6-phosphate isomerase 1, chloroplastic (PGI1) of Arabidopsis thaliana (Mouse-ear cress).